A 117-amino-acid polypeptide reads, in one-letter code: DNA-binding protein RdgB (117 aa).

A DNA-binding region (H-T-H motif) is located at residues 82 to 102; the sequence is NHSALAKKYNVSLQWIYKIVR.

It belongs to the c/mor transcriptional regulatory family.

Functionally, regulates pectin lyase production in response to DNA damage. This is DNA-binding protein RdgB (rdgB) from Pectobacterium carotovorum subsp. carotovorum (Erwinia carotovora subsp. carotovora).